A 414-amino-acid polypeptide reads, in one-letter code: Isocitrate dehydrogenase [NADP] cytoplasmic (414 aa).

Ser-2 is modified (N-acetylserine). Tyr-42 carries the phosphotyrosine modification. 75-77 (TIT) is a binding site for NADP(+). Thr-77 is a substrate binding site. At Lys-81 the chain carries N6-acetyllysine. Position 82 (Arg-82) interacts with NADP(+). Substrate-binding positions include 94 to 100 (SPNGTIR) and Arg-109. Position 126 is an N6-succinyllysine (Lys-126). 2 residues coordinate substrate: Arg-132 and Lys-212. Lys-224, Lys-233, and Lys-243 each carry N6-acetyllysine. Asp-252 provides a ligand contact to Mn(2+). Lys-260 contributes to the NADP(+) binding site. Residues Asp-275 and Asp-279 each contribute to the Mn(2+) site. Residue 310-315 (GTVTRH) participates in NADP(+) binding. Position 321 is an N6-acetyllysine (Lys-321). Position 328 (Asn-328) interacts with NADP(+). The residue at position 389 (Ser-389) is a Phosphoserine. Lys-400 is subject to N6-succinyllysine.

Belongs to the isocitrate and isopropylmalate dehydrogenases family. Homodimer. Requires Mg(2+) as cofactor. It depends on Mn(2+) as a cofactor. Acetylation at Lys-374 dramatically reduces catalytic activity.

It is found in the cytoplasm. The protein resides in the cytosol. The catalysed reaction is D-threo-isocitrate + NADP(+) = 2-oxoglutarate + CO2 + NADPH. In terms of biological role, catalyzes the NADP(+)-dependent oxidative decarboxylation of isocitrate (D-threo-isocitrate) to 2-ketoglutarate (2-oxoglutarate), which is required by other enzymes such as the phytanoyl-CoA dioxygenase. Plays a critical role in the generation of NADPH, an important cofactor in many biosynthesis pathways. May act as a corneal epithelial crystallin and may be involved in maintaining corneal epithelial transparency. In Microtus ochrogaster (Prairie vole), this protein is Isocitrate dehydrogenase [NADP] cytoplasmic (IDH1).